The primary structure comprises 112 residues: Nitrogen regulatory protein P-II (112 aa).

Tyr51 is subject to O-UMP-tyrosine.

This sequence belongs to the P(II) protein family. Homotrimer.

P-II indirectly controls the transcription of the glutamine synthetase gene (glnA). P-II prevents NR-II-catalyzed conversion of NR-I to NR-I-phosphate, the transcriptional activator of glnA. When P-II is uridylylated to P-II-UMP, these events are reversed. When the ratio of Gln to 2-ketoglutarate decreases, P-II is uridylylated to P-II-UMP, which causes the deadenylation of glutamine synthetase, so activating the enzyme. This chain is Nitrogen regulatory protein P-II (glnB), found in Rhodospirillum rubrum (strain ATCC 11170 / ATH 1.1.1 / DSM 467 / LMG 4362 / NCIMB 8255 / S1).